The following is an 840-amino-acid chain: MHLVAGDSPGSGPHLPATAFIIPASSATLGLPSSALDVSCFPREPIHVGAPEQVAGCEPVSATVLPQLSAGPASSSTSTVRLLEWTEAAAPPPGGGLRFRISEYKPLNMAGVEQPPSPELRQEGVTEYEDGGAPAGDGEAGPQQAEDHPQNPPEDPNQDPPEDDSTCQCQACGPHQAAGPDLGSSNDGCPQLFQERSVIVENSSGSTSASELLKPMKKRKRREYQSPSEEESEPEAMEKQEEGKDPEGQPTASTPESEEWSSSQPATGEKKECWSWESYLEEQKAITAPVSLFQDSQAVTHNKNGFKLGMKLEGIDPQHPSMYFILTVAEVCGYRLRLHFDGYSECHDFWVNANSPDIHPAGWFEKTGHKLQPPKGYKEEEFSWSQYLRSTRAQAAPKHLFVSQSHSPPPLGFQVGMKLEAVDRMNPSLVCVASVTDVVDSRFLVHFDNWDDTYDYWCDPSSPYIHPVGWCQKQGKPLTPPQDYPDPDNFCWEKYLEETGASAVPTWAFKVRPPHSFLVNMKLEAVDRRNPALIRVASVEDVEDHRIKIHFDGWSHGYDFWIDADHPDIHPAGWCSKTGHPLQPPLGPREPSSASPGGCPPLSYRSLPHTRTSKYSFHHRKCPTPGCDGSGHVTGKFTAHHCLSGCPLAERNQSRLKAELSDSEASARKKNLSGFSPRKKPRHHGRIGRPPKYRKIPQEDFQTLTPDVVHQSLFMSALSAHPDRSLSVCWEQHCKLLPGVAGISASTVAKWTIDEVFGFVQTLTGCEDQARLFKDEARIVRVTHVSGKTLVWTVAQLGDLVCSDHLQEGKGILETGVHSLLCSLPTHLLAKLSFASDSQY.

A Phosphoserine modification is found at S117. Positions 127–269 (EYEDGGAPAG…WSSSQPATGE (143 aa)) are disordered. A compositionally biased stretch (acidic residues) spans 156 to 165 (PNQDPPEDDS). Positions 200–210 (VENSSGSTSAS) are enriched in polar residues. Over residues 236-247 (AMEKQEEGKDPE) the composition is skewed to basic and acidic residues. Residues 250–266 (PTASTPESEEWSSSQPA) are compositionally biased toward polar residues. MBT repeat units follow at residues 274–374 (WSWE…LQPP), 382–481 (FSWS…LTPP), and 490–585 (FCWE…LQPP). Residues 447–454 (FDNWDDTY) form an interaction with monomethylated and dimethylated peptides region. The interval 580–605 (HPLQPPLGPREPSSASPGGCPPLSYR) is disordered. The segment at 613 to 656 (SKYSFHHRKCPTPGCDGSGHVTGKFTAHHCLSGCPLAERNQSRL) adopts a CCHHC-type zinc-finger fold. 4 residues coordinate Zn(2+): C622, C627, H640, and C646. The interval 657 to 697 (KAELSDSEASARKKNLSGFSPRKKPRHHGRIGRPPKYRKIP) is disordered. The span at 677-695 (PRKKPRHHGRIGRPPKYRK) shows a compositional bias: basic residues.

In terms of assembly, homodimer. Interacts with RB1/RB (when monomethylated at 'Lys-860'). Interacts with p53/TP53 (when monomethylated at 'Lys-382'). Interacts with CBX3, ETV6, KMT5A and VCP/p97. Post-translationally, ubiquitinated in a VCP/p97-dependent way following DNA damage, leading to its removal from DNA damage sites, promoting accessibility of H4K20me2 mark for DNA repair protein TP53BP1, which is then recruited to DNA damage sites. As to expression, widely expressed. Expression is reduced in colorectal cancer cell line SW480 and promyelocytic leukemia cell line HL-60.

The protein localises to the nucleus. Its function is as follows. Polycomb group (PcG) protein that specifically recognizes and binds mono- and dimethyllysine residues on target proteins, thereby acting as a 'reader' of a network of post-translational modifications. PcG proteins maintain the transcriptionally repressive state of genes: acts as a chromatin compaction factor by recognizing and binding mono- and dimethylated histone H1b/H1-4 at 'Lys-26' (H1bK26me1 and H1bK26me2) and histone H4 at 'Lys-20' (H4K20me1 and H4K20me2), leading to condense chromatin and repress transcription. Recognizes and binds p53/TP53 monomethylated at 'Lys-382', leading to repress p53/TP53-target genes. Also recognizes and binds RB1/RB monomethylated at 'Lys-860'. Participates in the ETV6-mediated repression. Probably plays a role in cell proliferation. Overexpression induces multinucleated cells, suggesting that it is required to accomplish normal mitosis. The chain is Lethal(3)malignant brain tumor-like protein 1 (L3MBTL1) from Homo sapiens (Human).